The sequence spans 355 residues: Uroporphyrinogen decarboxylase (355 aa).

Substrate is bound by residues 27–31 (RQAGR), D77, Y154, T209, and H328.

The protein belongs to the uroporphyrinogen decarboxylase family. As to quaternary structure, homodimer.

The protein localises to the cytoplasm. The enzyme catalyses uroporphyrinogen III + 4 H(+) = coproporphyrinogen III + 4 CO2. It participates in porphyrin-containing compound metabolism; protoporphyrin-IX biosynthesis; coproporphyrinogen-III from 5-aminolevulinate: step 4/4. Catalyzes the decarboxylation of four acetate groups of uroporphyrinogen-III to yield coproporphyrinogen-III. This Aliivibrio salmonicida (strain LFI1238) (Vibrio salmonicida (strain LFI1238)) protein is Uroporphyrinogen decarboxylase.